A 121-amino-acid polypeptide reads, in one-letter code: MRLNSKQPRKQRKFLYNAPLHLRQKMMAAPLSKELREKYKIRNLPVRVGDKVRIMRGDFKGHEGKVVEVDLKRYRIYVEGATLRKTNGTEVFYPIHPSNVMIIELNLDDERRKKIIERRAG.

Belongs to the universal ribosomal protein uL24 family. Part of the 50S ribosomal subunit.

In terms of biological role, one of two assembly initiator proteins, it binds directly to the 5'-end of the 23S rRNA, where it nucleates assembly of the 50S subunit. Located at the polypeptide exit tunnel on the outside of the subunit. This is Large ribosomal subunit protein uL24 from Pyrococcus abyssi (strain GE5 / Orsay).